A 384-amino-acid polypeptide reads, in one-letter code: Dual-specificity RNA methyltransferase RlmN (384 aa).

Glu-105 serves as the catalytic Proton acceptor. The region spanning 111-350 (EDDRATLCVS…TIVRKTRGDD (240 aa)) is the Radical SAM core domain. Residues Cys-118 and Cys-355 are joined by a disulfide bond. [4Fe-4S] cluster-binding residues include Cys-125, Cys-129, and Cys-132. Residues 179-180 (GE), Ser-211, 233-235 (SLH), and Asn-312 each bind S-adenosyl-L-methionine. Cys-355 serves as the catalytic S-methylcysteine intermediate.

This sequence belongs to the radical SAM superfamily. RlmN family. It depends on [4Fe-4S] cluster as a cofactor.

The protein resides in the cytoplasm. It catalyses the reaction adenosine(2503) in 23S rRNA + 2 reduced [2Fe-2S]-[ferredoxin] + 2 S-adenosyl-L-methionine = 2-methyladenosine(2503) in 23S rRNA + 5'-deoxyadenosine + L-methionine + 2 oxidized [2Fe-2S]-[ferredoxin] + S-adenosyl-L-homocysteine. The enzyme catalyses adenosine(37) in tRNA + 2 reduced [2Fe-2S]-[ferredoxin] + 2 S-adenosyl-L-methionine = 2-methyladenosine(37) in tRNA + 5'-deoxyadenosine + L-methionine + 2 oxidized [2Fe-2S]-[ferredoxin] + S-adenosyl-L-homocysteine. In terms of biological role, specifically methylates position 2 of adenine 2503 in 23S rRNA and position 2 of adenine 37 in tRNAs. m2A2503 modification seems to play a crucial role in the proofreading step occurring at the peptidyl transferase center and thus would serve to optimize ribosomal fidelity. The chain is Dual-specificity RNA methyltransferase RlmN from Escherichia coli O6:H1 (strain CFT073 / ATCC 700928 / UPEC).